A 307-amino-acid chain; its full sequence is Aspartate carbamoyltransferase catalytic subunit (307 aa).

Positions 54 and 55 each coordinate carbamoyl phosphate. Position 83 (K83) interacts with L-aspartate. R104, H132, and Q135 together coordinate carbamoyl phosphate. L-aspartate is bound by residues R165 and R228. L267 and P268 together coordinate carbamoyl phosphate.

Belongs to the aspartate/ornithine carbamoyltransferase superfamily. ATCase family. In terms of assembly, heterododecamer (2C3:3R2) of six catalytic PyrB chains organized as two trimers (C3), and six regulatory PyrI chains organized as three dimers (R2).

It carries out the reaction carbamoyl phosphate + L-aspartate = N-carbamoyl-L-aspartate + phosphate + H(+). It functions in the pathway pyrimidine metabolism; UMP biosynthesis via de novo pathway; (S)-dihydroorotate from bicarbonate: step 2/3. Functionally, catalyzes the condensation of carbamoyl phosphate and aspartate to form carbamoyl aspartate and inorganic phosphate, the committed step in the de novo pyrimidine nucleotide biosynthesis pathway. The protein is Aspartate carbamoyltransferase catalytic subunit of Clostridium botulinum (strain Eklund 17B / Type B).